We begin with the raw amino-acid sequence, 782 residues long: Shutoff protein (782 aa).

Positions 262–329 (VMNQLLIKRA…AVLVTVELEC (68 aa)) are binding to host EIF4G. One can recognise an RRM domain in the interval 332–450 (RFFSDITTLR…SLWTGFDERT (119 aa)). Residues Y349 and Y665 each carry the phosphotyrosine; by host modification. A disordered region spans residues 715 to 760 (GGRILGESGRGRGRGLGRMGGGGGGQPRRGSRGGGGRFQGRSDRRQ). Gly residues predominate over residues 728-752 (RGLGRMGGGGGGQPRRGSRGGGGRF).

Belongs to the adenoviridae shutoff protein family. As to quaternary structure, monomer. Interacts with hexon protein; this interaction allows chaperoning and trimerization of hexon proteins. Interacts (via N-terminus) with host initiation factor EIF4G (via C-terminus). Interacts (via RRM domain) with viral mRNAs that contain the tripartite leader; this interaction allows ribosome shunting and expression of viral late mRNAs. Post-translationally, might be cleaved by the viral protease. In terms of processing, phosphorylated. Tyrosine phosphorylation enhances preferential binding to tripartite leader mRNAs and allows ribosome shunting. Methylated. Asymmetric dimethylation by host PRMT1 of the Arg/Gly-rich region may regulate shutoff protein binding to hexon and promote the capsid assembly in the nucleus.

The protein resides in the host cytoplasm. Protein that inhibits host translation while promoting late viral translation by ribosome shunting. Blocks host cap-dependent translation by binding to eIF4G, displacing MKNK1 from cap initiation complexes and preventing EIF4E phosphorylation. Binds to the tripartite leader sequence of viral late mRNAs and recruits host eIF4G, PABPC1/poly-A binding protein and 40S ribosomes subunits on viral mRNAs, allowing ribosome shunting and efficient translation of late viral mRNAs even though conventional translation via ribosome scanning from the cap has been shut off in the host cell. During assembly, acts as a chaperone protein that helps hexon proteins assembly into trimers. The sequence is that of Shutoff protein from Human adenovirus A serotype 12 (HAdV-12).